We begin with the raw amino-acid sequence, 1872 residues long: Plexin-A3 (1872 aa).

Positions 1–19 (MHTVCLLPLLFFTIGGCLG) are cleaved as a signal peptide. One can recognise a Sema domain in the interval 20–489 (SSRPFRTFVV…SEKQVSQLPV (470 aa)). Residues 20–1220 (SSRPFRTFVV…ITADRALTLP (1201 aa)) are Extracellular-facing. The N-linked (GlcNAc...) asparagine glycan is linked to Asn-60. Intrachain disulfides connect Cys-78/Cys-87, Cys-113/Cys-121, Cys-267/Cys-388, Cys-283/Cys-339, Cys-357/Cys-376, Cys-492/Cys-509, Cys-498/Cys-540, Cys-501/Cys-518, and Cys-512/Cys-524. Asn-549 carries N-linked (GlcNAc...) asparagine glycosylation. Cys-575 and Cys-595 are joined by a disulfide. IPT/TIG domains are found at residues 841 to 934 (PRIT…YSFV), 936 to 1021 (PTLD…YTYT), 1024 to 1123 (PTVT…FTYY), and 1126 to 1212 (PSFE…LHIT). Asn-1163 carries an N-linked (GlcNAc...) asparagine glycan. The helical transmembrane segment at 1221–1241 (AMVGLAAGGGLLLLAITVVLV) threads the bilayer. The stretch at 1240-1294 (LVAYKRKTQDADRTLKRLQLQMDNLESRVALECKEAFAELQTDINELTNHMDGVQ) forms a coiled coil. Residues 1242–1872 (AYKRKTQDAD…QIITLVSSSS (631 aa)) are Cytoplasmic-facing. Ser-1597 carries the post-translational modification Phosphoserine.

It belongs to the plexin family.

Its subcellular location is the cell membrane. Coreceptor for SEMA3A and SEMA3F. Necessary for signaling by class 3 semaphorins and subsequent remodeling of the cytoskeleton. Plays a role in axon guidance in the developing nervous system. Regulates the migration of sympathetic neurons, but not of neural crest precursors. Required for normal dendrite spine morphology in pyramidal neurons. May play a role in regulating semaphorin-mediated programmed cell death in the developing nervous system. Class 3 semaphorins bind to a complex composed of a neuropilin and a plexin. The plexin modulates the affinity of the complex for specific semaphorins, and its cytoplasmic domain is required for the activation of down-stream signaling events in the cytoplasm. The protein is Plexin-A3 (Plxna3) of Rattus norvegicus (Rat).